We begin with the raw amino-acid sequence, 147 residues long: Large ribosomal subunit protein uL15 (147 aa).

Positions 1 to 58 (MKLHELKPAQGSTKAPKRLGRGIGSGTGKTSGKGHKGQKARAGGGVRPGFEGGQQPLA) are disordered. Gly residues-rich tracts occupy residues 21–31 (RGIGSGTGKTS) and 42–52 (AGGGVRPGFEG).

Belongs to the universal ribosomal protein uL15 family. As to quaternary structure, part of the 50S ribosomal subunit.

Binds to the 23S rRNA. This chain is Large ribosomal subunit protein uL15, found in Desulfitobacterium hafniense (strain Y51).